Here is a 220-residue protein sequence, read N- to C-terminus: Acetate CoA-transferase subunit alpha (220 aa).

Residue 24 to 30 (GGFMGIG) participates in CoA binding.

Belongs to the 3-oxoacid CoA-transferase subunit A family. Heterotetramer composed of two alpha subunits (AtoD) and two beta subunits (AtoA).

The protein localises to the cytoplasm. It catalyses the reaction an acyl-CoA + acetate = a carboxylate + acetyl-CoA. The catalysed reaction is acetoacetate + acetyl-CoA = acetoacetyl-CoA + acetate. It carries out the reaction butanoate + acetyl-CoA = butanoyl-CoA + acetate. The enzyme catalyses acetoacetate + butanoyl-CoA = acetoacetyl-CoA + butanoate. Its pathway is lipid metabolism; short-chain fatty acid metabolism. Inhibited by p-chloromercuribenzoate. Coenzyme A transferase which is involved in short-chain fatty acid degradation and catalyzes the activation of short-chain fatty acids to their respective CoA thiolesters. During acetoacetate degradation, catalyzes the transfer of CoA from acetyl-CoA to acetoacetate by a mechanism involving a covalent enzyme-CoA compound as a reaction intermediate. Utilizes a variety of short chain acyl-CoA and carboxylic acid substrates but exhibits maximal activity with normal and 3-keto substrates. This chain is Acetate CoA-transferase subunit alpha, found in Escherichia coli (strain K12).